Consider the following 673-residue polypeptide: Fatty acyl-CoA synthetase B (673 aa).

Residues 1–18 (MINNWLAVGLLVVSGILA) form the signal peptide. N-linked (GlcNAc...) asparagine glycosylation is present at Asn267.

Belongs to the ATP-dependent AMP-binding enzyme family.

It localises to the endoplasmic reticulum. The catalysed reaction is a long-chain fatty acid + ATP + CoA = a long-chain fatty acyl-CoA + AMP + diphosphate. In terms of biological role, long chain fatty acid acyl-CoA synthetases catalyze the formation of a thiester bond between a free fatty acid and coenzyme A during fatty acid metabolic process. This Dictyostelium discoideum (Social amoeba) protein is Fatty acyl-CoA synthetase B (fcsB).